The primary structure comprises 113 residues: Cell cycle protein GpsB (113 aa).

The stretch at 36–68 forms a coiled coil; the sequence is LDMVIKDYSTFTQEIEALQAENIRLVQELDNAP.

This sequence belongs to the GpsB family. In terms of assembly, forms polymers through the coiled coil domains. Interacts with PBP1, MreC and EzrA.

It is found in the cytoplasm. Divisome component that associates with the complex late in its assembly, after the Z-ring is formed, and is dependent on DivIC and PBP2B for its recruitment to the divisome. Together with EzrA, is a key component of the system that regulates PBP1 localization during cell cycle progression. Its main role could be the removal of PBP1 from the cell pole after pole maturation is completed. Also contributes to the recruitment of PBP1 to the division complex. Not essential for septum formation. This chain is Cell cycle protein GpsB, found in Listeria innocua serovar 6a (strain ATCC BAA-680 / CLIP 11262).